Reading from the N-terminus, the 375-residue chain is Carboxypeptidase O (375 aa).

Residues 1 to 20 (MKPLLGTFYLLGMLVPGWLG) form the signal peptide. Residues 50-345 (RYHPMGEIYQ…EAVLSVLDDV (296 aa)) form the Peptidase M14 domain. Zn(2+) contacts are provided by H109 and E112. N-linked (GlcNAc...) asparagine glycosylation occurs at N175. Residue H237 participates in Zn(2+) binding. An N-linked (GlcNAc...) asparagine glycan is attached at N252. The active-site Proton donor/acceptor is the E311. A glycan (N-linked (GlcNAc...) asparagine) is linked at N315. The GPI-anchor amidated serine moiety is linked to residue S354. Positions 355–375 (ARKAKSTALVLGLLMSFMSLL) are cleaved as a propeptide — removed in mature form.

It belongs to the peptidase M14 family. Zn(2+) is required as a cofactor.

It localises to the apical cell membrane. In terms of biological role, carboxypeptidase which preferentially cleaves C-terminal acidic residues from peptides and proteins. Can also cleave C-terminal hydrophobic amino acids, with a preference for small residues over large residues. In Bos taurus (Bovine), this protein is Carboxypeptidase O.